The chain runs to 225 residues: Uridylate kinase (225 aa).

9–10 serves as a coordination point for ATP; that stretch reads GS. Position 46 (Gly-46) interacts with UMP. The ATP site is built by Gly-47 and Arg-51. Residues Asp-67 and 115-121 contribute to the UMP site; that span reads THPAHTT. Residues Thr-141, Asn-142, Tyr-147, and Asp-150 each contribute to the ATP site.

It belongs to the UMP kinase family. In terms of assembly, homohexamer.

The protein resides in the cytoplasm. It carries out the reaction UMP + ATP = UDP + ADP. The protein operates within pyrimidine metabolism; CTP biosynthesis via de novo pathway; UDP from UMP (UMPK route): step 1/1. Its activity is regulated as follows. Inhibited by UTP. Functionally, catalyzes the reversible phosphorylation of UMP to UDP. The sequence is that of Uridylate kinase from Methanococcus maripaludis (strain C7 / ATCC BAA-1331).